The sequence spans 253 residues: MRILVANDDGYLAPGLAALVAVCKEFGDVEVVAPEQNASGTSNALTLTRPLSVHTAANGFRYVNGTPSDCVHVALTGLLAQRPDLVVSGINNGANMGDDTIYSGTVAAAMEGYLFGVPAIAFSLVDKGWSHLDAATRAARGVLAHVLASGWHREHWLLNVNIPSRPDAAELPLQITRLGKRHASEPVICQTSPRGEPIYWIGAAGDAREAGEGTDFHAVANGHVSITPLQVDLTDHGRLGTWSQRWQDHGSRA.

The a divalent metal cation site is built by D8, D9, S39, and N91.

This sequence belongs to the SurE nucleotidase family. A divalent metal cation serves as cofactor.

Its subcellular location is the cytoplasm. It catalyses the reaction a ribonucleoside 5'-phosphate + H2O = a ribonucleoside + phosphate. Functionally, nucleotidase that shows phosphatase activity on nucleoside 5'-monophosphates. This Leptothrix cholodnii (strain ATCC 51168 / LMG 8142 / SP-6) (Leptothrix discophora (strain SP-6)) protein is 5'-nucleotidase SurE.